The sequence spans 142 residues: Transcriptional regulator MraZ (142 aa).

2 SpoVT-AbrB domains span residues 5–47 (RFTH…PMDS) and 76–119 (ATVV…SPEN).

This sequence belongs to the MraZ family. In terms of assembly, forms oligomers.

The protein localises to the cytoplasm. Its subcellular location is the nucleoid. The polypeptide is Transcriptional regulator MraZ (Thermomicrobium roseum (strain ATCC 27502 / DSM 5159 / P-2)).